Consider the following 411-residue polypeptide: Carbamoyl phosphate synthase arginine-specific small chain (411 aa).

Residues S50, G232, and G234 each contribute to the L-glutamine site. The 192-residue stretch at N185–Q376 folds into the Glutamine amidotransferase type-1 domain. Catalysis depends on C264, which acts as the Nucleophile. L-glutamine is bound by residues L265, Q268, N306, G308, and Y309. Residues H349 and E351 contribute to the active site.

It belongs to the CarA family. As to quaternary structure, heterodimer composed of 2 chains; the small (or glutamine) chain promotes the hydrolysis of glutamine to ammonia, which is used by the large (or ammonia) chain to synthesize carbamoyl phosphate.

The protein resides in the cytoplasm. The enzyme catalyses hydrogencarbonate + L-glutamine + 2 ATP + H2O = carbamoyl phosphate + L-glutamate + 2 ADP + phosphate + 2 H(+). It catalyses the reaction L-glutamine + H2O = L-glutamate + NH4(+). Its pathway is amino-acid biosynthesis; L-arginine biosynthesis; carbamoyl phosphate from bicarbonate: step 1/1. In terms of biological role, small subunit of the arginine-specific carbamoyl phosphate synthase (CPSase). CPSase catalyzes the formation of carbamoyl phosphate from the ammonia moiety of glutamine, carbonate, and phosphate donated by ATP, constituting the first step of 2 biosynthetic pathways, one leading to arginine and/or urea and the other to pyrimidine nucleotides. The small subunit (glutamine amidotransferase) binds and cleaves glutamine to supply the large subunit with the substrate ammonia. This Saccharomyces cerevisiae (strain ATCC 204508 / S288c) (Baker's yeast) protein is Carbamoyl phosphate synthase arginine-specific small chain (CPA1).